A 300-amino-acid chain; its full sequence is Bifunctional protein FolD (300 aa).

NADP(+) contacts are provided by residues 168–170 (GRS), S193, and I234.

Belongs to the tetrahydrofolate dehydrogenase/cyclohydrolase family. As to quaternary structure, homodimer.

It catalyses the reaction (6R)-5,10-methylene-5,6,7,8-tetrahydrofolate + NADP(+) = (6R)-5,10-methenyltetrahydrofolate + NADPH. The catalysed reaction is (6R)-5,10-methenyltetrahydrofolate + H2O = (6R)-10-formyltetrahydrofolate + H(+). It functions in the pathway one-carbon metabolism; tetrahydrofolate interconversion. Its function is as follows. Catalyzes the oxidation of 5,10-methylenetetrahydrofolate to 5,10-methenyltetrahydrofolate and then the hydrolysis of 5,10-methenyltetrahydrofolate to 10-formyltetrahydrofolate. The polypeptide is Bifunctional protein FolD (Ehrlichia ruminantium (strain Gardel)).